Reading from the N-terminus, the 179-residue chain is Putative manganese efflux pump MntP (179 aa).

Transmembrane regions (helical) follow at residues 4 to 24, 39 to 59, 69 to 89, 102 to 122, 128 to 148, and 159 to 179; these read VLILAFALSMDAFAVSIGLGI, LFFGIFQALMPFLGFLGGIGL, IVAFILLLAIGGKMIYEAFNE, ILLTLAIATSLDAMAAGYSLH, IYLSLFVIGFTTFIISYIGVY, and SKAEILGGVVLILIGLKILLF.

This sequence belongs to the MntP (TC 9.B.29) family.

It is found in the cell inner membrane. Probably functions as a manganese efflux pump. The chain is Putative manganese efflux pump MntP from Aliarcobacter butzleri (strain RM4018) (Arcobacter butzleri).